A 98-amino-acid polypeptide reads, in one-letter code: MYYVIFAQDIPNTLEKRLAVREQHLARLKQLQAENRLLTAGPNPAIDDENPSEAGFTGSTVIAQFENLQAAKDWAAQDPYVEAGVYADVIVKPFKKVF.

The protein belongs to the YciI family. As to quaternary structure, homodimer.

This is an uncharacterized protein from Haemophilus influenzae (strain ATCC 51907 / DSM 11121 / KW20 / Rd).